The sequence spans 316 residues: DNA-directed RNA polymerase subunit alpha (316 aa).

The segment at 1–232 (MSGNDLFPST…DLFNPLHHCS (232 aa)) is alpha N-terminal domain (alpha-NTD). The alpha C-terminal domain (alpha-CTD) stretch occupies residues 247–316 (KINDILVEEL…LNIYLPKEKY (70 aa)).

Belongs to the RNA polymerase alpha chain family. In plastids the minimal PEP RNA polymerase catalytic core is composed of four subunits: alpha, beta, beta', and beta''. When a (nuclear-encoded) sigma factor is associated with the core the holoenzyme is formed, which can initiate transcription.

The protein localises to the plastid. Its subcellular location is the chloroplast. The enzyme catalyses RNA(n) + a ribonucleoside 5'-triphosphate = RNA(n+1) + diphosphate. DNA-dependent RNA polymerase catalyzes the transcription of DNA into RNA using the four ribonucleoside triphosphates as substrates. In Mesostigma viride (Green alga), this protein is DNA-directed RNA polymerase subunit alpha.